The following is a 510-amino-acid chain: E3 ubiquitin-protein ligase TRIM7 (510 aa).

An RING-type zinc finger spans residues 29 to 81 (CSICLEFFREPVSVECGHSFCRACIMRCWERPGAGTGTATRTLPCPLPCPQCR). Ser106 is subject to Phosphoserine; by RPS6KA5. The segment at 124 to 165 (AAAARCSQHGEQLKLYCQDDGRAICVVCDRAREHRSHAVLPL) adopts a B box-type zinc-finger fold. Positions 129, 132, 151, and 157 each coordinate Zn(2+). The stretch at 165 to 275 (LEEAVQEAKE…SGQIQETAQK (111 aa)) forms a coiled coil. Residues 323-510 (LLKKFKEDLQ…STGTYLRIWP (188 aa)) form the B30.2/SPRY domain.

The protein belongs to the TRIM/RBCC family. As to quaternary structure, forms homodimers. Interacts with GNIP2. Interacts with GYG1. Interacts with RNF187 (via C-terminus). Phosphorylated at Ser-106 by RPS6KA5/MSK1, which stimulates the ubiquitin ligase activity. Post-translationally, auto-ubiquitinates via 'Lys-63'-linked polyubiquitination. As to expression, highly expressed in antigen-presenting cells.

Its subcellular location is the nucleus. It is found in the cytoplasm. The protein localises to the golgi apparatus. It carries out the reaction S-ubiquitinyl-[E2 ubiquitin-conjugating enzyme]-L-cysteine + [acceptor protein]-L-lysine = [E2 ubiquitin-conjugating enzyme]-L-cysteine + N(6)-ubiquitinyl-[acceptor protein]-L-lysine.. It participates in protein modification; protein ubiquitination. E3 ubiquitin-protein ligase that have both tumor-promoting and tumor-suppressing activities and functions in several biological processes including innate immunity, regulation of ferroptosis as well as cell proliferation and migration. Acts as an antiviral effector against multiple viruses by targeting specific viral proteins for ubiquitination and degradation including norovirus NTPase protein. Mechanistically, recognizes the C-terminal glutamine-containing motif generated by viral proteases that process the polyproteins and trigger their ubiquitination and subsequent degradation. Mediates 'Lys-63'-linked polyubiquitination and stabilization of the JUN coactivator RNF187 in response to growth factor signaling via the MEK/ERK pathway, thereby regulating JUN transactivation and cellular proliferation. Promotes the TLR4-mediated signaling activation through its E3 ligase domain leading to production of pro-inflammatory cytokines and type I interferon. Also plays a negative role in the regulation of exogenous cytosolic DNA virus-triggered immune response. Mechanistically, enhances the 'Lys-48'-linked ubiquitination of STING1 leading to its proteasome-dependent degradation. Mediates the ubiquitination of the SIN3-HDAC chromatin remodeling complex component BRMS1. Modulates NCOA4-mediated ferritinophagy and ferroptosis in glioblastoma cells by ubiquitinating NCOA4, leading to its degradation. The sequence is that of E3 ubiquitin-protein ligase TRIM7 (Trim7) from Mus musculus (Mouse).